We begin with the raw amino-acid sequence, 277 residues long: uncharacterized protein (277 aa).

Positions 1 to 20 (MVTTSPPPTLTNSVQPHPTT) are disordered.

This is an uncharacterized protein from Acidianus convivator (ATV).